The sequence spans 201 residues: dITP/XTP pyrophosphatase (201 aa).

Substrate is bound at residue 9–14 (TRNSGK). 2 residues coordinate Mg(2+): E42 and D71. D71 acts as the Proton acceptor in catalysis. Substrate-binding positions include S72, 156-159 (FGYD), K178, and 183-184 (HR).

It belongs to the HAM1 NTPase family. Homodimer. The cofactor is Mg(2+).

It carries out the reaction XTP + H2O = XMP + diphosphate + H(+). The enzyme catalyses dITP + H2O = dIMP + diphosphate + H(+). The catalysed reaction is ITP + H2O = IMP + diphosphate + H(+). Its function is as follows. Pyrophosphatase that catalyzes the hydrolysis of nucleoside triphosphates to their monophosphate derivatives, with a high preference for the non-canonical purine nucleotides XTP (xanthosine triphosphate), dITP (deoxyinosine triphosphate) and ITP. Seems to function as a house-cleaning enzyme that removes non-canonical purine nucleotides from the nucleotide pool, thus preventing their incorporation into DNA/RNA and avoiding chromosomal lesions. This chain is dITP/XTP pyrophosphatase (ynbD), found in Lactococcus lactis subsp. lactis (strain IL1403) (Streptococcus lactis).